Reading from the N-terminus, the 1018-residue chain is Thrombospondin type-1 domain-containing protein 4 (1018 aa).

The N-terminal stretch at 1–25 (MVSHFMGSLSVLCFLLLLGFQFVCP) is a signal peptide. In terms of domain architecture, TSP type-1 1 spans 53-307 (PGVWGAWGPW…YKLCNTNVCP (255 aa)). Disordered regions lie at residues 111 to 235 (SVPL…RSGL), 254 to 279 (PAASSLFHSPETSNNHGVGTHGATQS), and 534 to 623 (SPQV…NWKQ). The span at 187 to 200 (QRLRRQKLSSRHSR) shows a compositional bias: basic residues. Positions 201–210 (SQGASSARHG) are enriched in low complexity. Residues 259-279 (LFHSPETSNNHGVGTHGATQS) are compositionally biased toward polar residues. Composition is skewed to basic and acidic residues over residues 556–577 (RSQEEGEQKGRNEEKEDLRGEA) and 592–603 (RHPDRFSPHRPD). 5 TSP type-1 domains span residues 676–737 (CPAF…KICS), 739–792 (WQIR…DMGP), 793–851 (CAKS…GPCT), 852–911 (GKVE…HLKP), and 912–968 (CGAK…QDCV). Residues 971–1008 (VDENCKDKYYNCNVVVQARLCVYNYYKTACCASCTRVA) enclose the PLAC domain.

Interacts with FBN1. May interact with TGFB1.

It is found in the secreted. The protein localises to the extracellular space. It localises to the extracellular matrix. Functionally, promotes FBN1 matrix assembly. Attenuates TGFB signaling, possibly by accelerating the sequestration of large latent complexes of TGFB or active TGFB by FBN1 microfibril assembly, thereby negatively regulating the expression of TGFB regulatory targets, such as POSTN. In Homo sapiens (Human), this protein is Thrombospondin type-1 domain-containing protein 4 (THSD4).